The chain runs to 820 residues: Leucine--tRNA ligase (820 aa).

The 'HIGH' region signature appears at 42-52 (PYPSGDLHMGH). A 'KMSKS' region motif is present at residues 576-580 (KMSKS). An ATP-binding site is contributed by K579.

Belongs to the class-I aminoacyl-tRNA synthetase family.

The protein localises to the cytoplasm. The enzyme catalyses tRNA(Leu) + L-leucine + ATP = L-leucyl-tRNA(Leu) + AMP + diphosphate. This chain is Leucine--tRNA ligase, found in Coxiella burnetii (strain CbuK_Q154) (Coxiella burnetii (strain Q154)).